The following is a 112-amino-acid chain: Large ribosomal subunit protein mL53 (112 aa).

The protein belongs to the mitochondrion-specific ribosomal protein mL53 family. As to quaternary structure, component of the mitochondrial ribosome large subunit (39S) which comprises a 16S rRNA and about 50 distinct proteins.

The protein localises to the mitochondrion. This Pongo abelii (Sumatran orangutan) protein is Large ribosomal subunit protein mL53 (MRPL53).